The sequence spans 697 residues: MTELSKYRNIGIFAHVDAGKTTTTERILKLTGKIHKIGEVHDGESTTDFMVQEAERGITIQSAAVSCFWKDHRFNVIDTPGHVDFTVEVYRSLKVLDGGIAVFCGSGGVEPQSETNWRYANESEVARIIFVNKLDRMGADFLRVVKQTKDVLAANPLVMVLPIGIEDEFCGVVDLLTRKAYVWDDSGIPENFEVKDVPANMVDLVEEYREMLIETAVEQDDDLLEAYMEGEEPSIEDLKRCIRKGTRTMAFFPTFCGSAFKNKGMQLVLDAVVDYLPAPDEVDPQPLTDEEGNETGEYAIVSADESLKALAFKIMDDRFGALTFVRIYAGRLKKGDTILNSATGKTERIGRMCEMYANDRIEIESAEAGDIIAIVGMKNVQTGHTLCDVKHPCTLEAMVFPEPVISIAVAPKDKGGSEKMAIAIGKMIAEDPSFRVETDEDSGETILKGMGELHLDIKVDILKRTYGVELIVGEPQVAYRETITAMVEDQYTHKKQSGGSGQFGKIEYIIRPGEPNSGFVFKSSVVGGSVPKEFWPAVEKGFASMMNTGTIAGFPVLDVEFELTDGAYHAVDSSAIAFEIAAKAAFRQSIAKAKPQLLEPIMKVDVFSPDDNVGDVIGDLNRRRGMIKDQVAGITGVRVKADVPLSEMFGYIGSLRTMTSGRGQFSMEFSHYSPCPNSVADKVVEQVKERKAAEAKK.

The 276-residue stretch at 5 to 280 (SKYRNIGIFA…AVVDYLPAPD (276 aa)) folds into the tr-type G domain. Residues 14 to 21 (AHVDAGKT), 78 to 82 (DTPGH), and 132 to 135 (NKLD) contribute to the GTP site.

This sequence belongs to the TRAFAC class translation factor GTPase superfamily. Classic translation factor GTPase family. EF-G/EF-2 subfamily.

It is found in the cytoplasm. Its function is as follows. Catalyzes the GTP-dependent ribosomal translocation step during translation elongation. During this step, the ribosome changes from the pre-translocational (PRE) to the post-translocational (POST) state as the newly formed A-site-bound peptidyl-tRNA and P-site-bound deacylated tRNA move to the P and E sites, respectively. Catalyzes the coordinated movement of the two tRNA molecules, the mRNA and conformational changes in the ribosome. This is Elongation factor G 2 (fusB) from Shewanella oneidensis (strain ATCC 700550 / JCM 31522 / CIP 106686 / LMG 19005 / NCIMB 14063 / MR-1).